Reading from the N-terminus, the 138-residue chain is Aspartate 1-decarboxylase (138 aa).

Ser25 functions as the Schiff-base intermediate with substrate; via pyruvic acid in the catalytic mechanism. Ser25 carries the post-translational modification Pyruvic acid (Ser). Thr57 is a substrate binding site. Tyr58 acts as the Proton donor in catalysis. A substrate-binding site is contributed by Gly73–Ala75. The disordered stretch occupies residues Val117 to Val138.

Belongs to the PanD family. As to quaternary structure, heterooctamer of four alpha and four beta subunits. Pyruvate serves as cofactor. Is synthesized initially as an inactive proenzyme, which is activated by self-cleavage at a specific serine bond to produce a beta-subunit with a hydroxyl group at its C-terminus and an alpha-subunit with a pyruvoyl group at its N-terminus.

The protein localises to the cytoplasm. It catalyses the reaction L-aspartate + H(+) = beta-alanine + CO2. It functions in the pathway cofactor biosynthesis; (R)-pantothenate biosynthesis; beta-alanine from L-aspartate: step 1/1. In terms of biological role, catalyzes the pyruvoyl-dependent decarboxylation of aspartate to produce beta-alanine. The polypeptide is Aspartate 1-decarboxylase (Clavibacter michiganensis subsp. michiganensis (strain NCPPB 382)).